Here is a 128-residue protein sequence, read N- to C-terminus: Sulfurtransferase TusD (128 aa).

The active-site Cysteine persulfide intermediate is Cys-78.

This sequence belongs to the DsrE/TusD family. As to quaternary structure, heterohexamer, formed by a dimer of trimers. The hexameric TusBCD complex contains 2 copies each of TusB, TusC and TusD. The TusBCD complex interacts with TusE.

It is found in the cytoplasm. Its function is as follows. Part of a sulfur-relay system required for 2-thiolation of 5-methylaminomethyl-2-thiouridine (mnm(5)s(2)U) at tRNA wobble positions. Accepts sulfur from TusA and transfers it in turn to TusE. In Salmonella typhi, this protein is Sulfurtransferase TusD.